The sequence spans 210 residues: MAWSITNKADTSSFTKMAEIRAHLRNSAENKDKNEDIFPEDVIIPSTKPKTKRTTTPRKPAATKRSTKKDKEKEEVEEVVIEEYHQTTEENSPPPSSSPGVGDIVESVAAVELDDSDGDDEPMVQVEAGKVNHSARSDLSDLKVATDNIVKDLKKIITRISAVSTVLEDVQAAGISRQFTSMTKAITTLSDLVTEGKSKVVRKKVKTCKK.

A compositionally biased stretch (basic and acidic residues) spans 25 to 36; the sequence is RNSAENKDKNED. The segment at 25 to 102 is disordered; it reads RNSAENKDKN…PPPSSSPGVG (78 aa). Positions 49–68 are enriched in basic residues; the sequence is PKTKRTTTPRKPAATKRSTK.

It belongs to the orthopoxvirus OPG110 family. In terms of assembly, interacts with the DNA polymerase processivity factor A20. Interacts with B1R kinase. Interacts with the late transcription factors VLTF-1 and VLTF-3. Interacts with the late transcription elongation factor G2. Interacts with itself. Might be part of a transcription complex composed at least of G2, A18, and H5. Post-translationally, phosphorylated at multiple sites. Phosphorylation is necessary for cleavage activity. Phosphorylated by the viral B1R and F10 kinases.

It localises to the virion. The protein resides in the host cytoplasm. In terms of biological role, involved in the co-transcriptional or post-transcriptional endoribonucleolytic cleavage that generates sequence-homogeneous 3' ends during late transcription. Involved in postreplicative transcription elongation on intermediate and late genes. Also involved in DNA replication and in multiple steps of virion morphogenesis. Required both for inclusion of virosoplasm into crescents as well as for maturation of immature virions (IV) into mature virions (MV). The protein is Late transcription elongation factor OPG110 (OPG110) of Cynomys gunnisoni (Gunnison's prairie dog).